The primary structure comprises 300 residues: MAEKNRLVTVAALQFACTDDVSTNVATAERLVRAAHQKGANIILIQELFEGYYFCQAQKEEFFHRAKPYLGHPTIVRMQNLAKELGVVIPVSFFEEANNAHYNSVAIIDADGTDLGLYRKSHIPDGPGYQEKFYFNPGDTGFKVFQTKYAKIGVAICWDQWFPEAARAMALQGAEVLFYPTAIGSEPQDDGLDSRDHWRRVMQGHAGANVVPLVASNRIGKEIIETEHGNSEITFYGYSFIAGPTGELVAAAGDKEEAVLVAQFDLDKIKSKRHGWGVYRDRRPDLYKVLLTLDGSNPVK.

The region spanning 8–266 (VTVAALQFAC…EAVLVAQFDL (259 aa)) is the CN hydrolase domain. E47 acts as the Proton acceptor in catalysis. Residue K120 is the Proton donor of the active site. The active-site Nucleophile is C157.

Belongs to the carbon-nitrogen hydrolase superfamily. In terms of assembly, homooctamer.

It catalyses the reaction N-carbamoylputrescine + H2O + 2 H(+) = putrescine + NH4(+) + CO2. Its pathway is amine and polyamine biosynthesis; putrescine biosynthesis via agmatine pathway; putrescine from N-carbamoylputrescine (amidase route): step 1/1. Involved in polyamine biosynthesis. In Solanum tuberosum (Potato), this protein is N-carbamoylputrescine amidase (CPA).